Reading from the N-terminus, the 221-residue chain is Thiamine-phosphate synthase (221 aa).

Residues 39 to 43 (QLRCK) and N76 contribute to the 4-amino-2-methyl-5-(diphosphooxymethyl)pyrimidine site. Residues D77 and D96 each coordinate Mg(2+). S114 contributes to the 4-amino-2-methyl-5-(diphosphooxymethyl)pyrimidine binding site. Residue 140–142 (TPT) participates in 2-[(2R,5Z)-2-carboxy-4-methylthiazol-5(2H)-ylidene]ethyl phosphate binding. K143 contributes to the 4-amino-2-methyl-5-(diphosphooxymethyl)pyrimidine binding site. Residue G171 participates in 2-[(2R,5Z)-2-carboxy-4-methylthiazol-5(2H)-ylidene]ethyl phosphate binding.

The protein belongs to the thiamine-phosphate synthase family. The cofactor is Mg(2+).

The enzyme catalyses 2-[(2R,5Z)-2-carboxy-4-methylthiazol-5(2H)-ylidene]ethyl phosphate + 4-amino-2-methyl-5-(diphosphooxymethyl)pyrimidine + 2 H(+) = thiamine phosphate + CO2 + diphosphate. It carries out the reaction 2-(2-carboxy-4-methylthiazol-5-yl)ethyl phosphate + 4-amino-2-methyl-5-(diphosphooxymethyl)pyrimidine + 2 H(+) = thiamine phosphate + CO2 + diphosphate. It catalyses the reaction 4-methyl-5-(2-phosphooxyethyl)-thiazole + 4-amino-2-methyl-5-(diphosphooxymethyl)pyrimidine + H(+) = thiamine phosphate + diphosphate. It functions in the pathway cofactor biosynthesis; thiamine diphosphate biosynthesis; thiamine phosphate from 4-amino-2-methyl-5-diphosphomethylpyrimidine and 4-methyl-5-(2-phosphoethyl)-thiazole: step 1/1. Functionally, condenses 4-methyl-5-(beta-hydroxyethyl)thiazole monophosphate (THZ-P) and 2-methyl-4-amino-5-hydroxymethyl pyrimidine pyrophosphate (HMP-PP) to form thiamine monophosphate (TMP). This Deinococcus geothermalis (strain DSM 11300 / CIP 105573 / AG-3a) protein is Thiamine-phosphate synthase.